Here is a 225-residue protein sequence, read N- to C-terminus: UPF0758 protein AZOSEA04420 (225 aa).

In terms of domain architecture, MPN spans 102–225 (VFESPLAVRN…PLSFAERGLL (124 aa)). Zn(2+)-binding residues include H173, H175, and D186. A JAMM motif motif is present at residues 173–186 (HNHPSGAAEPSPAD).

The protein belongs to the UPF0758 family.

The polypeptide is UPF0758 protein AZOSEA04420 (Aromatoleum aromaticum (strain DSM 19018 / LMG 30748 / EbN1) (Azoarcus sp. (strain EbN1))).